Reading from the N-terminus, the 126-residue chain is Glycine cleavage system H protein (126 aa).

The 83-residue stretch at 21–103 folds into the Lipoyl-binding domain; sequence TVTIGISEHA…YEGGWIVKVK (83 aa). K62 carries the N6-lipoyllysine modification.

It belongs to the GcvH family. In terms of assembly, the glycine cleavage system is composed of four proteins: P, T, L and H. Requires (R)-lipoate as cofactor.

Functionally, the glycine cleavage system catalyzes the degradation of glycine. The H protein shuttles the methylamine group of glycine from the P protein to the T protein. In Vibrio atlanticus (strain LGP32) (Vibrio splendidus (strain Mel32)), this protein is Glycine cleavage system H protein.